The sequence spans 703 residues: NADH-quinone oxidoreductase chain 12 (703 aa).

Transmembrane regions (helical) follow at residues 4 to 24 (FVLF…RAIG), 30 to 50 (YLTT…FLSF), 79 to 99 (LTAI…MYSL), 116 to 136 (ARFF…VTAD), 138 to 158 (LLQM…LIGF), 179 to 199 (GDFG…SVQF), 224 to 244 (ANLL…QLLL), 256 to 276 (TPVS…FLVC), 290 to 310 (NFIV…GLVQ), 325 to 345 (LGYM…FHLL), 346 to 366 (THAF…HAMH), 381 to 401 (IPLT…VGIP), 415 to 435 (AIIE…VIAA), 475 to 495 (LGVL…PFFG), 580 to 600 (VSPF…YIAN), and 679 to 699 (LFHY…WVMM).

The protein belongs to the complex I subunit 5 family. In terms of assembly, NDH-1 is composed of at least 14 different subunits, Nqo1 to Nqo14. The complex has a L-shaped structure, with the hydrophobic arm (subunits Nqo7, Nqo8, Nqo10 to Nqo14) embedded in the inner membrane and the hydrophilic peripheral arm (subunits Nqo1 to Nqo6, Nqo9) protruding into the bacterial cytoplasm. The hydrophilic domain contains all the redox centers.

It localises to the cell inner membrane. The enzyme catalyses a quinone + NADH + 5 H(+)(in) = a quinol + NAD(+) + 4 H(+)(out). Functionally, NDH-1 shuttles electrons from NADH, via FMN and iron-sulfur (Fe-S) centers, to quinones in the respiratory chain. The immediate electron acceptor for the enzyme in this species is believed to be ubiquinone. Couples the redox reaction to proton translocation (for every two electrons transferred, four hydrogen ions are translocated across the cytoplasmic membrane), and thus conserves the redox energy in a proton gradient. The chain is NADH-quinone oxidoreductase chain 12 from Paracoccus denitrificans.